The primary structure comprises 682 residues: DNA ligase (682 aa).

NAD(+) is bound by residues 42–46, 91–92, and Glu-124; these read DAEYD and SL. The active-site N6-AMP-lysine intermediate is Lys-126. Positions 147, 184, 302, and 326 each coordinate NAD(+). Zn(2+) is bound by residues Cys-420, Cys-423, Cys-438, and Cys-444. In terms of domain architecture, BRCT spans 603–682; the sequence is IADNPLKGKS…QEFIALTGEN (80 aa).

Belongs to the NAD-dependent DNA ligase family. LigA subfamily. Requires Mg(2+) as cofactor. Mn(2+) serves as cofactor.

The catalysed reaction is NAD(+) + (deoxyribonucleotide)n-3'-hydroxyl + 5'-phospho-(deoxyribonucleotide)m = (deoxyribonucleotide)n+m + AMP + beta-nicotinamide D-nucleotide.. Its function is as follows. DNA ligase that catalyzes the formation of phosphodiester linkages between 5'-phosphoryl and 3'-hydroxyl groups in double-stranded DNA using NAD as a coenzyme and as the energy source for the reaction. It is essential for DNA replication and repair of damaged DNA. This Actinobacillus pleuropneumoniae serotype 7 (strain AP76) protein is DNA ligase.